Here is a 76-residue protein sequence, read N- to C-terminus: Exodeoxyribonuclease 7 small subunit (76 aa).

The protein belongs to the XseB family. In terms of assembly, heterooligomer composed of large and small subunits.

It localises to the cytoplasm. It catalyses the reaction Exonucleolytic cleavage in either 5'- to 3'- or 3'- to 5'-direction to yield nucleoside 5'-phosphates.. In terms of biological role, bidirectionally degrades single-stranded DNA into large acid-insoluble oligonucleotides, which are then degraded further into small acid-soluble oligonucleotides. This is Exodeoxyribonuclease 7 small subunit from Geobacillus thermodenitrificans (strain NG80-2).